A 229-amino-acid chain; its full sequence is MSFEISVEEIEELIETGNLNIDHALKELGATSQSSLNKPPSQSSRTEGNDGGTKISRNPAPVEAPAHTSTAQRSHNEENESGRQNLDSLSMISNKPQTGTLLMGSDTQLPSPSKTYQGLILDAKKRALNEPRRDQKITNEHGSMNDTRIFKRGEYRYQERGLGYTESEIKNTTPTPRHRREYSISWVNGRTTISEWCNPCCAPVKSTASVEKCTCGRCPKICELCIRDP.

Polar residues-rich tracts occupy residues Ala-30 to Thr-46 and Gly-82 to Pro-112. Positions Ala-30–Pro-112 are disordered. The Zn(2+) site is built by His-178, Cys-197, Cys-201, Cys-213, Cys-215, Cys-218, Cys-222, and Cys-225.

It belongs to the paramyxoviruses V protein family.

In terms of biological role, blocks host interferon signaling. This Homo sapiens (Human) protein is Non-structural protein V (P/V).